The chain runs to 317 residues: Acetyl-coenzyme A carboxylase carboxyl transferase subunit alpha (317 aa).

The CoA carboxyltransferase C-terminal domain maps to 40–294; the sequence is RLQKKSEELT…KQQILADLQD (255 aa).

This sequence belongs to the AccA family. Acetyl-CoA carboxylase is a heterohexamer composed of biotin carboxyl carrier protein (AccB), biotin carboxylase (AccC) and two subunits each of ACCase subunit alpha (AccA) and ACCase subunit beta (AccD).

It localises to the cytoplasm. It catalyses the reaction N(6)-carboxybiotinyl-L-lysyl-[protein] + acetyl-CoA = N(6)-biotinyl-L-lysyl-[protein] + malonyl-CoA. The protein operates within lipid metabolism; malonyl-CoA biosynthesis; malonyl-CoA from acetyl-CoA: step 1/1. Functionally, component of the acetyl coenzyme A carboxylase (ACC) complex. First, biotin carboxylase catalyzes the carboxylation of biotin on its carrier protein (BCCP) and then the CO(2) group is transferred by the carboxyltransferase to acetyl-CoA to form malonyl-CoA. The sequence is that of Acetyl-coenzyme A carboxylase carboxyl transferase subunit alpha from Actinobacillus pleuropneumoniae serotype 5b (strain L20).